The following is a 613-amino-acid chain: MFNMNVDESASGALGSSAIPVHPTPASVRLFEILQGKYAYVQGQTIYANLRNPGVFSRQVFTHLFKRAISHCTYDDVLHDWNKFEACIQKRWPSDDSCASRFRESTFESWSTTMKLTVRDLLTTNIYRVLHSRSVLSYERYVDWICATGMVPAVKKPITQELHSKIKSLRDRCVCRELGHERTIRSIGTELYEATREIIESLNSTFIPQFTEVTIEYLPGSDEYVAYYCGRRIRLHVLFPPAIFAGTVTFDSPVQRLYQNIFMCYRTLEHAKICQLLNTAPLKAIVGHGGRDMYKDILAHLEQNSQRKDPKKELLNLLVKLSENKTISGVTDVVEEFITDASNNLVDRNRLFGQPGETAAQGLKKKVSNTVVKCLTDQINEQFDQINGLEKERELYLKKIRSMESQLQASLGPGGNNPAASAPAAVAAEAASVDILTGSTASAIEKLFNSPSASLGARVSGHNESILNSFVSQYIPPSREMTKDLTELWESELFNTFKLTPVVDNQGQRLYVRYSSDTISILLGPFTYLVAELSPVELVTDVYATLGIVEIIDELYRSSRLAIYIEDLGRKYCPASATGGDHGIRQAPSARGDAEPDHAKSKPARDPPPGAGS.

A disordered region spans residues Ala-577–Ser-613. The span at Gly-592 to Arg-605 shows a compositional bias: basic and acidic residues.

Belongs to the herpesviridae portal protein family. Homododecamerizes. Interacts with terminase subunits TRM1 and TRM3.

It localises to the virion. Its subcellular location is the host nucleus. In terms of biological role, forms a portal in the viral capsid through which viral DNA is translocated during DNA packaging. Assembles as a dodecamer at a single fivefold axe of the T=16 icosahedric capsid. Binds to the molecular motor that translocates the viral DNA, termed terminase. The sequence is that of Portal protein from Homo sapiens (Human).